A 392-amino-acid polypeptide reads, in one-letter code: Imidazolonepropionase (392 aa).

2 residues coordinate Fe(3+): His-70 and His-72. Zn(2+)-binding residues include His-70 and His-72. The 4-imidazolone-5-propanoate site is built by Arg-79, Tyr-137, and His-164. Tyr-137 serves as a coordination point for N-formimidoyl-L-glutamate. Residue His-227 coordinates Fe(3+). His-227 lines the Zn(2+) pocket. Residue Gln-230 coordinates 4-imidazolone-5-propanoate. Asp-301 is a Fe(3+) binding site. Position 301 (Asp-301) interacts with Zn(2+). Asn-303 and Gly-305 together coordinate N-formimidoyl-L-glutamate. 4-imidazolone-5-propanoate is bound at residue Thr-306.

This sequence belongs to the metallo-dependent hydrolases superfamily. HutI family. The cofactor is Zn(2+). It depends on Fe(3+) as a cofactor.

It localises to the cytoplasm. It carries out the reaction 4-imidazolone-5-propanoate + H2O = N-formimidoyl-L-glutamate. It participates in amino-acid degradation; L-histidine degradation into L-glutamate; N-formimidoyl-L-glutamate from L-histidine: step 3/3. Functionally, catalyzes the hydrolytic cleavage of the carbon-nitrogen bond in imidazolone-5-propanoate to yield N-formimidoyl-L-glutamate. It is the third step in the universal histidine degradation pathway. The sequence is that of Imidazolonepropionase from Nocardia farcinica (strain IFM 10152).